We begin with the raw amino-acid sequence, 573 residues long: FAD-dependent monooxygenase resA (573 aa).

An N-terminal signal peptide occupies residues 1–17 (MYDVIVIGAGWCGLVAA). An FAD-binding site is contributed by I106. A glycan (N-linked (GlcNAc...) asparagine) is linked at N235.

Belongs to the FAD-binding monooxygenase family. It depends on FAD as a cofactor.

It functions in the pathway antifungal biosynthesis. Functionally, FAD-dependent monooxygenase; part of the gene cluster that mediates the biosynthesis of the tetrahydropyranyl antifungal agent restricticin that acts as an inhibitor of CYP51 and blocks the ergosterol biosynthesis. The highly reducing polyketide synthase resH, the short chain dehydrogenase resG, the cyclase resF, the FAD-dependent monooxygenase resA and the enoylreductase resD are required to generate the first stable intermediate desmethylrestrictinol. ResH with resD biosynthesize the first polyketide chain intermediate that is reduced by resG, followed by epoxidation by resA before 6-endo cyclization via epoxide opening by resF leads to desmethylrestrictinol. The methyltransferase resE then catalyzes the C4 O-methylation of desmethylrestrictinol to produce restrictinol, and the nonribosomal peptide synthetase resC catalyzes the C3 esterification of restrictinol with glycine that leads to restricticin. The protein is FAD-dependent monooxygenase resA of Aspergillus sclerotiorum.